The primary structure comprises 425 residues: Dihydroorotase (425 aa).

Residues His61 and His63 each contribute to the Zn(2+) site. Residues 63–65 and Asn95 each bind substrate; that span reads HLR. The Zn(2+) site is built by Asp153, His180, and His233. Asn279 serves as a coordination point for substrate. Position 306 (Asp306) interacts with Zn(2+). Asp306 is an active-site residue. Position 310 (His310) interacts with substrate.

This sequence belongs to the metallo-dependent hydrolases superfamily. DHOase family. Class I DHOase subfamily. It depends on Zn(2+) as a cofactor.

The catalysed reaction is (S)-dihydroorotate + H2O = N-carbamoyl-L-aspartate + H(+). The protein operates within pyrimidine metabolism; UMP biosynthesis via de novo pathway; (S)-dihydroorotate from bicarbonate: step 3/3. Its function is as follows. Catalyzes the reversible cyclization of carbamoyl aspartate to dihydroorotate. This Geobacter sp. (strain M21) protein is Dihydroorotase.